A 543-amino-acid polypeptide reads, in one-letter code: Protein DETOXIFICATION 47, chloroplastic (543 aa).

The N-terminal 30 residues, 1–30 (MLIKSQRLTLFSPLLSKTRRIPVNSHQTLV), are a transit peptide targeting the chloroplast. A coiled-coil region spans residues 55–94 (VIRRRIKLERVTRNCVRIDREIDEEEEEEEKERGDLVKQS). Transmembrane regions (helical) follow at residues 107-127 (GPAMGMWICGPLMSLIDTVVI), 135-155 (LAALGPGTVLCDHMSYVFMFL), 181-201 (VLLFIGLVCGLMMLLLTRLFG), 228-248 (GLAWPFILVGLVAQSASLGMK), 256-276 (ALAAATIINGLGDTILCLFLG), 278-298 (GIAGAAWATTASQIVSAYMMM), 319-339 (LWKISALAAPVFISIFSKIAF), 342-362 (FIIYCATSMGTHVLAAHQVMA), 406-426 (IIGATLGLVLGVIGTAVPGLF), 443-463 (LLIPFFMALSALPMTVSLEGT), 472-492 (FVSSVMSSSFIIGCLTLMFVT), and 497-517 (GLLGCWFVLVGFQWGRFGLYL).

This sequence belongs to the multi antimicrobial extrusion (MATE) (TC 2.A.66.1) family. Preferentially expressed in the epidermal cells.

It localises to the plastid. The protein resides in the chloroplast membrane. Functionally, functions as a multidrug and toxin extrusion transporter in the export of salicylic acid (SA) from the chloroplast to the cytoplasm. Plays an essential function in plant defense via the pathogen-induced salicylic acid (SA) accumulation. Also acts as a key component of the Age-related resistance (ARR) pathway. This Arabidopsis thaliana (Mouse-ear cress) protein is Protein DETOXIFICATION 47, chloroplastic.